The sequence spans 641 residues: Choline O-acetyltransferase (641 aa).

Residues 1–29 (MPILEKTPPKMAAKSPSSEEEPGLPKLPV) are disordered. The residue at position 17 (Ser17) is a Phosphoserine. Residue His335 is the Proton acceptor of the active site. Ser366 carries the phosphoserine modification. Residues 413-425 (GKTF…CSPD), Ser451, and Gln552 contribute to the CoA site. Positions 619-641 (QSGMGKPLATKEKVTRPSQVHQP) are disordered.

The protein belongs to the carnitine/choline acetyltransferase family.

The enzyme catalyses choline + acetyl-CoA = acetylcholine + CoA. Its function is as follows. Catalyzes the reversible synthesis of acetylcholine (ACh) from acetyl CoA and choline at cholinergic synapses. The polypeptide is Choline O-acetyltransferase (CHAT) (Sus scrofa (Pig)).